The sequence spans 117 residues: Histone H1-like protein HC1 (117 aa).

The tract at residues 57–117 (EKSGLMTRKP…KSSKSRYLRK (61 aa)) is disordered. The segment covering 66–81 (PATKAKKAAATKKAAP) has biased composition (basic residues). A compositionally biased stretch (low complexity) spans 82-94 (KPKIQAKAAPKAK). Residues 95 to 117 (ATTKKTPAKAKAKKSSKSRYLRK) show a composition bias toward basic residues.

The protein belongs to the histone H1/H5 family. HCT subfamily.

Might have a role analogous to that of eukaryotic histone proteins. In Chlamydia psittaci (Chlamydophila psittaci), this protein is Histone H1-like protein HC1 (hctA).